A 275-amino-acid polypeptide reads, in one-letter code: Large ribosomal subunit protein uL2 (275 aa).

The tract at residues 236–263 (EGRGKGQHPVTPWGMPTKGYKTRRGRRA) is disordered.

It belongs to the universal ribosomal protein uL2 family. As to quaternary structure, part of the 50S ribosomal subunit. Forms a bridge to the 30S subunit in the 70S ribosome.

In terms of biological role, one of the primary rRNA binding proteins. Required for association of the 30S and 50S subunits to form the 70S ribosome, for tRNA binding and peptide bond formation. It has been suggested to have peptidyltransferase activity; this is somewhat controversial. Makes several contacts with the 16S rRNA in the 70S ribosome. This Pseudothermotoga lettingae (strain ATCC BAA-301 / DSM 14385 / NBRC 107922 / TMO) (Thermotoga lettingae) protein is Large ribosomal subunit protein uL2.